Here is a 1427-residue protein sequence, read N- to C-terminus: DNA-directed RNA polymerase subunit beta' (1427 aa).

Residues C70, C72, C85, and C88 each coordinate Zn(2+). The Mg(2+) site is built by D461, D463, and D465. Residues C810, C884, C891, and C894 each contribute to the Zn(2+) site. Disordered stretches follow at residues 1044-1065 and 1394-1427; these read QTDE…AGRG and PEAA…GDEA.

Belongs to the RNA polymerase beta' chain family. The RNAP catalytic core consists of 2 alpha, 1 beta, 1 beta' and 1 omega subunit. When a sigma factor is associated with the core the holoenzyme is formed, which can initiate transcription. Mg(2+) serves as cofactor. Zn(2+) is required as a cofactor.

The catalysed reaction is RNA(n) + a ribonucleoside 5'-triphosphate = RNA(n+1) + diphosphate. Functionally, DNA-dependent RNA polymerase catalyzes the transcription of DNA into RNA using the four ribonucleoside triphosphates as substrates. The sequence is that of DNA-directed RNA polymerase subunit beta' from Novosphingobium aromaticivorans (strain ATCC 700278 / DSM 12444 / CCUG 56034 / CIP 105152 / NBRC 16084 / F199).